The chain runs to 777 residues: Glucocorticoid receptor (777 aa).

Positions 1 to 14 (MDSKESLTPGKEEN) are enriched in basic and acidic residues. Residues 1-23 (MDSKESLTPGKEENPSSVLTQER) are disordered. A modulating region spans residues 1–420 (MDSKESLTPG…TATTGPPPKL (420 aa)). Residue Thr-8 is modified to Phosphothreonine. Arg-23 bears the Omega-N-methylarginine mark. 4 positions are modified to phosphoserine: Ser-45, Ser-113, Ser-134, and Ser-141. Residues 130-182 (NRSTSVPENPKSSASSSVSAAPKEKEFPKTHSDVSSEQQNLKGQTGTNGGNVK) are disordered. Residues 134–150 (SVPENPKSSASSSVSAA) show a composition bias toward low complexity. The span at 151 to 163 (PKEKEFPKTHSDV) shows a compositional bias: basic and acidic residues. Positions 164–174 (SSEQQNLKGQT) are enriched in polar residues. 3 positions are modified to phosphoserine: Ser-203, Ser-211, and Ser-226. A Glycyl lysine isopeptide (Lys-Gly) (interchain with G-Cter in SUMO2) cross-link involves residue Lys-258. A Phosphoserine modification is found at Ser-267. Residues Lys-277 and Lys-293 each participate in a glycyl lysine isopeptide (Lys-Gly) (interchain with G-Cter in SUMO); alternate cross-link. Glycyl lysine isopeptide (Lys-Gly) (interchain with G-Cter in SUMO2); alternate cross-links involve residues Lys-277 and Lys-293. Over residues 394-414 (SSPSMRPDVSSPPSSSSTATT) the composition is skewed to low complexity. The disordered stretch occupies residues 394 to 415 (SSPSMRPDVSSPPSSSSTATTG). Ser-404 bears the Phosphoserine mark. A Glycyl lysine isopeptide (Lys-Gly) (interchain with G-Cter in ubiquitin) cross-link involves residue Lys-419. 2 consecutive NR C4-type zinc fingers follow at residues 421–441 (CLVC…CGSC) and 457–481 (CAGR…YRKC). Positions 421–486 (CLVCSDEASG…RYRKCLQAGM (66 aa)) form a DNA-binding region, nuclear receptor. Lys-480, Lys-492, Lys-494, and Lys-495 each carry N6-acetyllysine. The interaction with CLOCK stretch occupies residues 485 to 777 (GMNLEARKTK…NIKKLLFHQK (293 aa)). Residues 487–523 (NLEARKTKKKIKGIQQATTGVSQETSENPANKTIVPA) form a hinge region. The region spanning 524 to 758 (TLPQLTPTLV…FPEMLAEIIT (235 aa)) is the NR LBD domain. An interaction with CRY1 region spans residues 532–697 (LVSLLEVIEP…EIRMTYIKEL (166 aa)). Residue Lys-703 forms a Glycyl lysine isopeptide (Lys-Gly) (interchain with G-Cter in SUMO) linkage.

Belongs to the nuclear hormone receptor family. NR3 subfamily. In terms of assembly, heteromultimeric cytoplasmic complex with HSP90AA1, HSPA1A/HSPA1B, and FKBP5 or another immunophilin such as PPID, STIP1, or the immunophilin homolog PPP5C. Upon ligand binding FKBP5 dissociates from the complex and FKBP4 takes its place, thereby linking the complex to dynein and mediating transport to the nucleus, where the complex dissociates. Probably forms a complex composed of chaperones HSP90 and HSP70, co-chaperones CDC37, PPP5C, TSC1 and client protein TSC2, CDK4, AKT, RAF1 and NR3C1; this complex does not contain co-chaperones STIP1/HOP and PTGES3/p23. Directly interacts with UNC45A. Binds to DNA as a homodimer, and as heterodimer with NR3C2 or the retinoid X receptor. Binds STAT5A and STAT5B homodimers and heterodimers. Interacts with NRIP1, POU2F1, POU2F2 and TRIM28. Interacts with several coactivator complexes, including the SMARCA4 complex, CREBBP/EP300, TADA2L (Ada complex) and p160 coactivators such as NCOA2 and NCOA6. Interaction with BAG1 inhibits transactivation. Interacts with HEXIM1 and TGFB1I1. Interacts with NCOA1. Interacts with NCOA3, SMARCA4, SMARCC1, SMARCD1, and SMARCE1. Interacts with CLOCK, CRY1 and CRY2 in a ligand-dependent fashion. Interacts with CIART. Interacts with RWDD3. Interacts with UBE2I/UBC9 and this interaction is enhanced in the presence of RWDD3. Interacts with GRIP1. Interacts with NR4A3 (via nuclear receptor DNA-binding domain), represses transcription activity of NR4A3 on the POMC promoter Nur response element (NurRE). Directly interacts with PNRC2 to attract and form a complex with UPF1 and DCP1A; the interaction leads to rapid mRNA degradation. Interacts with GSK3B. Interacts with FNIP1 and FNIP2. Interacts (via C-terminus) with HNRNPU (via C-terminus). Interacts with MCM3AP. Interacts (via domain NR LBD) with HSP90AA1 and HSP90AB1. In the absence of hormonal ligand, interacts with TACC1. Interacts (via NR LBD domain) with ZNF764 (via KRAB domain); the interaction regulates transcription factor activity of NR3C1 by directing its actions toward certain biologic pathways. Acetylation by CLOCK reduces its binding to glucocorticoid response elements and its transcriptional activity. Post-translationally, increased proteasome-mediated degradation in response to glucocorticoids. In terms of processing, phosphorylated in the absence of hormone; becomes hyperphosphorylated in the presence of glucocorticoid. The Ser-203, Ser-226 and Ser-404-phosphorylated forms are mainly cytoplasmic, and the Ser-211-phosphorylated form is nuclear. Phosphorylation at Ser-211 increases transcriptional activity. Phosphorylation at Ser-203, Ser-226 and Ser-404 decreases signaling capacity. Phosphorylation at Ser-404 may protect from glucocorticoid-induced apoptosis. Phosphorylation at Ser-203 and Ser-211 is not required in regulation of chromosome segregation. May be dephosphorylated by PPP5C, attenuates NR3C1 action. Ubiquitinated by UBR5, leading to its degradation: UBR5 specifically recognizes and binds ligand-bound NR3C1 when it is not associated with coactivators (NCOAs). In presence of NCOAs, the UBR5-degron is not accessible, preventing its ubiquitination and degradation. Post-translationally, sumoylation at Lys-277 and Lys-293 negatively regulates its transcriptional activity. Sumoylation at Lys-703 positively regulates its transcriptional activity in the presence of RWDD3. Sumoylation at Lys-277 and Lys-293 is dispensable whereas sumoylation at Lys-703 is critical for the stimulatory effect of RWDD3 on its transcriptional activity. Heat shock increases sumoylation in a RWWD3-dependent manner.

The protein localises to the cytoplasm. It is found in the nucleus. The protein resides in the mitochondrion. Its subcellular location is the cytoskeleton. It localises to the spindle. The protein localises to the microtubule organizing center. It is found in the centrosome. The protein resides in the chromosome. Its subcellular location is the nucleoplasm. Receptor for glucocorticoids (GC). Has a dual mode of action: as a transcription factor that binds to glucocorticoid response elements (GRE), both for nuclear and mitochondrial DNA, and as a modulator of other transcription factors. Affects inflammatory responses, cellular proliferation and differentiation in target tissues. Involved in chromatin remodeling. Plays a role in rapid mRNA degradation by binding to the 5' UTR of target mRNAs and interacting with PNRC2 in a ligand-dependent manner which recruits the RNA helicase UPF1 and the mRNA-decapping enzyme DCP1A, leading to RNA decay. Could act as a coactivator for STAT5-dependent transcription upon growth hormone (GH) stimulation and could reveal an essential role of hepatic GR in the control of body growth. Mediates glucocorticoid-induced apoptosis. Promotes accurate chromosome segregation during mitosis. May act as a tumor suppressor. May play a negative role in adipogenesis through the regulation of lipolytic and antilipogenic gene expression. The chain is Glucocorticoid receptor (NR3C1) from Aotus nancymaae (Ma's night monkey).